A 64-amino-acid polypeptide reads, in one-letter code: Small ribosomal subunit protein bS21 (64 aa).

The segment at glutamate 37–alanine 64 is disordered. Positions arginine 53–alanine 64 are enriched in basic residues.

Belongs to the bacterial ribosomal protein bS21 family.

The chain is Small ribosomal subunit protein bS21 from Syntrophotalea carbinolica (strain DSM 2380 / NBRC 103641 / GraBd1) (Pelobacter carbinolicus).